The following is a 331-amino-acid chain: Fructose-1,6-bisphosphatase class 1 (331 aa).

Mg(2+) is bound by residues Glu80, Asp98, Leu100, and Asp101. Substrate contacts are provided by residues 101–104 (DGSS) and Asn189. Mg(2+) is bound at residue Glu261.

It belongs to the FBPase class 1 family. In terms of assembly, homotetramer. Mg(2+) serves as cofactor.

The protein localises to the cytoplasm. The enzyme catalyses beta-D-fructose 1,6-bisphosphate + H2O = beta-D-fructose 6-phosphate + phosphate. It functions in the pathway carbohydrate biosynthesis; gluconeogenesis. This chain is Fructose-1,6-bisphosphatase class 1, found in Rhodobacter capsulatus (strain ATCC BAA-309 / NBRC 16581 / SB1003).